The chain runs to 333 residues: Phosphoribosylformylglycinamidine cyclo-ligase (333 aa).

The protein belongs to the AIR synthase family.

Its subcellular location is the cytoplasm. The catalysed reaction is 2-formamido-N(1)-(5-O-phospho-beta-D-ribosyl)acetamidine + ATP = 5-amino-1-(5-phospho-beta-D-ribosyl)imidazole + ADP + phosphate + H(+). The protein operates within purine metabolism; IMP biosynthesis via de novo pathway; 5-amino-1-(5-phospho-D-ribosyl)imidazole from N(2)-formyl-N(1)-(5-phospho-D-ribosyl)glycinamide: step 2/2. This Methanosarcina mazei (strain ATCC BAA-159 / DSM 3647 / Goe1 / Go1 / JCM 11833 / OCM 88) (Methanosarcina frisia) protein is Phosphoribosylformylglycinamidine cyclo-ligase.